Consider the following 595-residue polypeptide: P2X purinoceptor 7 (595 aa).

Topologically, residues Met-1–Gln-22 are cytoplasmic. The S-palmitoyl cysteine moiety is linked to residue Cys-4. The helical transmembrane segment at Ser-23–Met-46 threads the bilayer. The Extracellular segment spans residues Ser-47 to Phe-328. Residue Asn-74 is glycosylated (N-linked (GlcNAc...) asparagine). 3 cysteine pairs are disulfide-bonded: Cys-119/Cys-168, Cys-129/Cys-152, and Cys-135/Cys-162. An ADP-ribosylarginine modification is found at Arg-125. Asn-187 carries an N-linked (GlcNAc...) asparagine glycan. Residue Thr-189 participates in ATP binding. 2 N-linked (GlcNAc...) asparagine glycosylation sites follow: Asn-202 and Asn-213. An intrachain disulfide couples Cys-216 to Cys-226. Asn-241 carries N-linked (GlcNAc...) asparagine glycosylation. The cysteines at positions 260 and 269 are disulfide-linked. Residue Asn-284 is glycosylated (N-linked (GlcNAc...) asparagine). Arg-294 and Lys-311 together coordinate ATP. Residues Asp-329–Leu-353 traverse the membrane as a helical segment. Na(+) is bound at residue Ser-342. Residues Ile-354–Tyr-595 are Cytoplasmic-facing. Positions Ser-360 to Cys-377 are C-cys anchor. S-palmitoyl cysteine attachment occurs at residues Cys-362, Cys-363, Cys-374, and Cys-377. Positions Lys-395–Tyr-595 are cytoplasmic ballast. 3 residues coordinate Zn(2+): Cys-479, Cys-499, and Cys-506. Positions 546, 547, 550, and 567 each coordinate GTP. Cys-572 is a binding site for Zn(2+). Residues Lys-583, Ser-589, and Gly-590 each coordinate GTP.

It belongs to the P2X receptor family. In terms of assembly, homotrimer. Interacts with LAMA3, ITGB2, ACTB, ACTN4, SVIL, MPP3, HSPA1, HSPCB, HSPA8, PIK230 and PTPRB. Interacts (via C-terminus) with EMP2. In terms of processing, phosphorylation results in its inactivation. ADP-ribosylation at Arg-125 is necessary and sufficient to activate P2RX7 and gate the channel. Post-translationally, palmitoylation of several cysteines in the C-terminal cytoplasmic tail is required for efficient localization to cell surface. Palmitoylation prevents channel desensitization by physically anchoring the palmitoylated groups to the membrane.

It localises to the cell membrane. It carries out the reaction Ca(2+)(in) = Ca(2+)(out). The catalysed reaction is K(+)(in) = K(+)(out). It catalyses the reaction Na(+)(in) = Na(+)(out). Its activity is regulated as follows. Activated by high extracellular ATP levels (0.1-2.5 mM). The synthetic analog 2'(3')-O-(4-benzoylbenzoyl)ATP (BzATP) acts as a potent agonist. Does not undergo desensitization, instead, undergoes a facilitation process where currents progressively increase with repetitive or prolonged agonist application. Palmitoylation prevents channel desensitization. The permeability of the P2RX7 channel is modulated by the amount of cholesterol in the plasma membrane. In terms of biological role, ATP-gated nonselective transmembrane cation channel that requires high millimolar concentrations of ATP for activation. Upon ATP binding, it rapidly opens to allow the influx of small cations Na(+) and Ca(2+), and the K(+) efflux. Also has the ability to form a large pore in the cell membrane, allowing the passage of large cationic molecules. In microglia, may mediate the transmembrane transport of exogenous NADPH. In immune cells, P2RX7 acts as a molecular sensor in pathological inflammatory states by detecting and responding to high local concentrations of extracellar ATP. In microglial cells, P2RX7 activation leads to the release of pro-inflammatory cytokines, such as IL-1beta and IL-18, through the activation of the NLRP3 inflammasome and caspase-1. Cooperates with KCNK6 to activate NLRP3 inflammasome. Activates death pathways leading to apoptosis and autophagy. Activates death pathways leading to pyroptosis. Functionally, has a higher affinity for ATP, slower deactivation and an increased propensity to form large cation-permeable pores. The sequence is that of P2X purinoceptor 7 (P2rx7) from Rattus norvegicus (Rat).